We begin with the raw amino-acid sequence, 237 residues long: Ribitol-5-phosphate cytidylyltransferase (237 aa).

CTP is bound by residues 7-10 (LAGG), 81-87 (GSDRNES), and S112.

Belongs to the IspD/TarI cytidylyltransferase family. TarI subfamily.

The catalysed reaction is D-ribitol 5-phosphate + CTP + H(+) = CDP-L-ribitol + diphosphate. Its pathway is cell wall biogenesis; poly(ribitol phosphate) teichoic acid biosynthesis. Functionally, catalyzes the transfer of the cytidylyl group of CTP to D-ribitol 5-phosphate. The protein is Ribitol-5-phosphate cytidylyltransferase of Bacillus spizizenii (strain ATCC 23059 / NRRL B-14472 / W23) (Bacillus subtilis subsp. spizizenii).